The chain runs to 1433 residues: Regulatory protein CAT8 (1433 aa).

The segment covering 20 to 38 has biased composition (polar residues); that stretch reads GSQALSGPSISNRTSSSEA. A disordered region spans residues 20–40; it reads GSQALSGPSISNRTSSSEANP. A DNA-binding region (zn(2)-C6 fungal-type) is located at residues 70 to 97; the sequence is CDRCRSKKTRCDGKRPQCSQCAAVGFEC. The span at 936–946 shows a compositional bias: polar residues; the sequence is KPLFGSQSKNS. 4 disordered regions span residues 936–1024, 1137–1162, 1200–1236, and 1324–1433; these read KPLF…DTKK, QNPENSKNNQFHQKGKSTNMEKNNLS, SASADPGTNKKAVTNAGANFKPPSTGSNTSQGSILGS, and LNPT…QNAK. Composition is skewed to basic and acidic residues over residues 947–965 and 994–1005; these read LENRQRTPNVKRENPEHEY and LKYEKDAKRNAK. Composition is skewed to polar residues over residues 1138–1162, 1221–1235, and 1326–1348; these read NPENSKNNQFHQKGKSTNMEKNNLS, PPSTGSNTSQGSILG, and PTDSILSQGMVSSVSTRNTSNQR. A compositionally biased stretch (low complexity) spans 1349–1362; it reads SLSSGNDSKGDSSS. 2 stretches are compositionally biased toward polar residues: residues 1363 to 1391 and 1418 to 1433; these read QENSKSATGNQLDTPSTLFQMRRTSSGPS and SNTDNVSDLFQWQNAK.

Could be the target of the SNF1/CAT1 - SNF4/CAT3 kinase complex.

It is found in the nucleus. Its function is as follows. Activator of the gluconeogenic enzymes FBP1 and PCK1 genes. This chain is Regulatory protein CAT8 (CAT8), found in Saccharomyces cerevisiae (strain ATCC 204508 / S288c) (Baker's yeast).